A 307-amino-acid chain; its full sequence is tRNA pseudouridine synthase B (307 aa).

Aspartate 45 acts as the Nucleophile in catalysis.

The protein belongs to the pseudouridine synthase TruB family. Type 1 subfamily.

The enzyme catalyses uridine(55) in tRNA = pseudouridine(55) in tRNA. Responsible for synthesis of pseudouridine from uracil-55 in the psi GC loop of transfer RNAs. This Heliobacterium mobile (Heliobacillus mobilis) protein is tRNA pseudouridine synthase B.